A 537-amino-acid chain; its full sequence is 2-succinyl-5-enolpyruvyl-6-hydroxy-3-cyclohexene-1-carboxylate synthase (537 aa).

Belongs to the TPP enzyme family. MenD subfamily. As to quaternary structure, homodimer. It depends on Mg(2+) as a cofactor. Mn(2+) is required as a cofactor. Requires thiamine diphosphate as cofactor.

It catalyses the reaction isochorismate + 2-oxoglutarate + H(+) = 5-enolpyruvoyl-6-hydroxy-2-succinyl-cyclohex-3-ene-1-carboxylate + CO2. It participates in quinol/quinone metabolism; 1,4-dihydroxy-2-naphthoate biosynthesis; 1,4-dihydroxy-2-naphthoate from chorismate: step 2/7. It functions in the pathway quinol/quinone metabolism; menaquinone biosynthesis. In terms of biological role, catalyzes the thiamine diphosphate-dependent decarboxylation of 2-oxoglutarate and the subsequent addition of the resulting succinic semialdehyde-thiamine pyrophosphate anion to isochorismate to yield 2-succinyl-5-enolpyruvyl-6-hydroxy-3-cyclohexene-1-carboxylate (SEPHCHC). The polypeptide is 2-succinyl-5-enolpyruvyl-6-hydroxy-3-cyclohexene-1-carboxylate synthase (Desulfotalea psychrophila (strain LSv54 / DSM 12343)).